The chain runs to 288 residues: Urease accessory protein UreD (288 aa).

Belongs to the UreD family. UreD, UreF and UreG form a complex that acts as a GTP-hydrolysis-dependent molecular chaperone, activating the urease apoprotein by helping to assemble the nickel containing metallocenter of UreC. The UreE protein probably delivers the nickel.

Its subcellular location is the cytoplasm. Functionally, required for maturation of urease via the functional incorporation of the urease nickel metallocenter. This chain is Urease accessory protein UreD, found in Dechloromonas aromatica (strain RCB).